A 474-amino-acid chain; its full sequence is Poly(A) polymerase catalytic subunit (474 aa).

Active-site residues include Asp193 and Asp195.

This sequence belongs to the poxviridae poly(A) polymerase catalytic subunit family. In terms of assembly, heterodimer of a large (catalytic) subunit and a small (regulatory) subunit.

The catalysed reaction is RNA(n) + ATP = RNA(n)-3'-adenine ribonucleotide + diphosphate. Functionally, polymerase that creates the 3'-poly(A) tail of mRNA's. This is Poly(A) polymerase catalytic subunit (PAPL) from Bos taurus (Bovine).